The sequence spans 402 residues: MAAATASTQLIFSKPCSPSRLCPFQLCVFDTKQVLSSGRRRHVGGSGVRCMAVGEAATTGTKKRSGYELQTLTSWLLKQEQAGVIDAELTIVLSSISMACKQIASLVQRANISNLTGVQGAVNVQGEDQKKLDVVSNEVFSNCLRSSGRTGIIASEEEDVPVAVEESYSGNYIVVFDPLDGSSNIDAAASTGSNFWIYSPNDECLADIDDDPTLDTTEQRCIVNVCQPGSNLLAAGYCMYSSSIIFVLTLGNGVFVFTLDPMYGEFVLTQENLQIPRAGKIYAFNEGNYQLWDEKLKKYIDDLKDPGQSGKPYSARYIGSLVGDFHRTLLYGGIYGYPRDKKSKNGKLRLLYECAPINFIVEQAGGKGTDGLQVLRLQGTEIHQRVPLYIGEEVEKVEKYLA.

The transit peptide at 1–50 (MAAATASTQLIFSKPCSPSRLCPFQLCVFDTKQVLSSGRRRHVGGSGVRC) directs the protein to the chloroplast. Mg(2+) contacts are provided by Glu-127, Glu-156, Asp-177, Leu-179, and Asp-180. 180–183 (DGSS) serves as a coordination point for substrate. Cysteines 221 and 226 form a disulfide. Substrate-binding residues include Asn-285, Tyr-317, Tyr-335, Tyr-337, and Lys-347. Glu-353 contributes to the Mg(2+) binding site.

This sequence belongs to the FBPase class 1 family. Homotetramer. The cofactor is Mg(2+).

It is found in the plastid. The protein resides in the chloroplast. It carries out the reaction beta-D-fructose 1,6-bisphosphate + H2O = beta-D-fructose 6-phosphate + phosphate. The protein operates within carbohydrate biosynthesis; Calvin cycle. This Glycine max (Soybean) protein is Fructose-1,6-bisphosphatase, chloroplastic (FBP).